The following is an 864-amino-acid chain: Leucine--tRNA ligase (864 aa).

The 'HIGH' region motif lies at 42–52 (PYPSGKLHMGH). Positions 624–628 (KMSKS) match the 'KMSKS' region motif. Lys627 is a binding site for ATP.

The protein belongs to the class-I aminoacyl-tRNA synthetase family.

The protein localises to the cytoplasm. The enzyme catalyses tRNA(Leu) + L-leucine + ATP = L-leucyl-tRNA(Leu) + AMP + diphosphate. In Paraburkholderia phymatum (strain DSM 17167 / CIP 108236 / LMG 21445 / STM815) (Burkholderia phymatum), this protein is Leucine--tRNA ligase.